We begin with the raw amino-acid sequence, 279 residues long: Movement protein (279 aa).

Positions 256–266 are enriched in low complexity; sequence PPIAIGSPSAS. Residues 256 to 279 form a disordered region; it reads PPIAIGSPSASRNNSFRSQVVNGL. The span at 267–279 shows a compositional bias: polar residues; that stretch reads RNNSFRSQVVNGL.

The protein belongs to the cucumovirus movement protein family.

It localises to the host cell junction. Its subcellular location is the host plasmodesma. Functionally, transports viral genome to neighboring plant cells directly through plasmosdesmata, without any budding. The movement protein allows efficient cell to cell propagation, by bypassing the host cell wall barrier. Acts by forming a tubular structure at the host plasmodesmata, enlarging it enough to allow free passage of virion capsids. The protein is Movement protein of Cucumis sativus (Cucumber).